The chain runs to 95 residues: Neutrophil antibiotic peptide NP-5 (95 aa).

Positions 1–19 (MRTLALLAAILLVTLQAQA) are cleaved as a signal peptide. The propeptide occupies 20–62 (ELHSGMADDGVDQQQPRAQDLDVAVYIKQDETSPLEVLGAKAG). 3 disulfide bridges follow: C65-C93, C67-C82, and C72-C92.

This sequence belongs to the alpha-defensin family.

The protein resides in the secreted. Its function is as follows. Microbicidal activity. In Oryctolagus cuniculus (Rabbit), this protein is Neutrophil antibiotic peptide NP-5.